A 730-amino-acid polypeptide reads, in one-letter code: Ribosomal RNA large subunit methyltransferase K/L (730 aa).

The 112-residue stretch at 46–157 folds into the THUMP domain; the sequence is TAYRLCVWSR…RGEAILSLDL (112 aa). Positions 395–418 are disordered; that stretch reads ERREAQPEGTEVRQQAPQASEPAR.

Belongs to the methyltransferase superfamily. RlmKL family.

Its subcellular location is the cytoplasm. The enzyme catalyses guanosine(2445) in 23S rRNA + S-adenosyl-L-methionine = N(2)-methylguanosine(2445) in 23S rRNA + S-adenosyl-L-homocysteine + H(+). The catalysed reaction is guanosine(2069) in 23S rRNA + S-adenosyl-L-methionine = N(2)-methylguanosine(2069) in 23S rRNA + S-adenosyl-L-homocysteine + H(+). Specifically methylates the guanine in position 2445 (m2G2445) and the guanine in position 2069 (m7G2069) of 23S rRNA. This chain is Ribosomal RNA large subunit methyltransferase K/L, found in Pseudomonas putida (strain GB-1).